Consider the following 151-residue polypeptide: Arginine repressor (151 aa).

Belongs to the ArgR family.

It is found in the cytoplasm. It functions in the pathway amino-acid biosynthesis; L-arginine biosynthesis [regulation]. Its function is as follows. Regulates arginine biosynthesis genes. The polypeptide is Arginine repressor (Heliobacterium modesticaldum (strain ATCC 51547 / Ice1)).